The primary structure comprises 196 residues: Phosphoheptose isomerase (196 aa).

The 160-residue stretch at 33–192 folds into the SIS domain; sequence LIQSLKNGGK…ESECGENGNT (160 aa). Position 48–50 (48–50) interacts with substrate; it reads NGG. Residues His57 and Glu61 each coordinate Zn(2+). Substrate contacts are provided by residues Glu61, 90–91, 116–118, Ser121, and Gln168; these read ND and STS. Residues Gln168 and His176 each contribute to the Zn(2+) site.

Belongs to the SIS family. GmhA subfamily. In terms of assembly, homotetramer. It depends on Zn(2+) as a cofactor.

Its subcellular location is the cytoplasm. The catalysed reaction is 2 D-sedoheptulose 7-phosphate = D-glycero-alpha-D-manno-heptose 7-phosphate + D-glycero-beta-D-manno-heptose 7-phosphate. It functions in the pathway carbohydrate biosynthesis; D-glycero-D-manno-heptose 7-phosphate biosynthesis; D-glycero-alpha-D-manno-heptose 7-phosphate and D-glycero-beta-D-manno-heptose 7-phosphate from sedoheptulose 7-phosphate: step 1/1. Catalyzes the isomerization of sedoheptulose 7-phosphate in D-glycero-D-manno-heptose 7-phosphate. The sequence is that of Phosphoheptose isomerase from Helicobacter hepaticus (strain ATCC 51449 / 3B1).